Here is a 537-residue protein sequence, read N- to C-terminus: Putative cysteine ligase BshC (537 aa).

Residues 422 to 450 (IEKVEGMIEQQRRLNQDLLDEVAGNQNNI) adopt a coiled-coil conformation.

It belongs to the BshC family.

In terms of biological role, involved in bacillithiol (BSH) biosynthesis. May catalyze the last step of the pathway, the addition of cysteine to glucosamine malate (GlcN-Mal) to generate BSH. This chain is Putative cysteine ligase BshC, found in Staphylococcus aureus (strain bovine RF122 / ET3-1).